We begin with the raw amino-acid sequence, 634 residues long: Probable potassium transport system protein Kup (634 aa).

12 helical membrane-spanning segments follow: residues 21–41, 61–81, 110–130, 148–168, 180–200, 217–237, 258–278, 296–316, 348–368, 377–397, 408–428, and 432–452; these read IILSAIGVVFGDIGTSPLYTL, ILSLIFWAMMLVVTIKYVAVI, IYIVGILGIFGTSLFFGDGVI, PHMKAFVVPITLAVLILLFLC, FGPITLLWFIAIGVVGVYNIA, FFLEHGWHSMFVLGAVVLAVT, WMYVVLPMLALNYLGQGALVL, GLYPMIALATAAAVIASQALI, IYVPTVNWTLLTLVILTVIGF, AYGVAVTGTMMITTVLMIIYA, LWMMAIVFIAVDGAFFYANII, and DGAWFPLLLGVVIFTFMRTWL.

The protein belongs to the HAK/KUP transporter (TC 2.A.72) family.

The protein localises to the cell inner membrane. The enzyme catalyses K(+)(in) + H(+)(in) = K(+)(out) + H(+)(out). Its function is as follows. Transport of potassium into the cell. Likely operates as a K(+):H(+) symporter. The protein is Probable potassium transport system protein Kup of Xylella fastidiosa (strain 9a5c).